Reading from the N-terminus, the 395-residue chain is Flap endonuclease 1 (395 aa).

An N-domain region spans residues 1–104; sequence MGIKHLYQVI…GELAKRFMRK (104 aa). Asp34 contributes to the Mg(2+) binding site. 2 residues coordinate DNA: Arg47 and Arg70. Positions 86, 158, 160, 179, and 181 each coordinate Mg(2+). Residues 122-253 form an I-domain region; it reads DVEKFSRRTV…NTALKLIRDH (132 aa). Glu158 contributes to the DNA binding site. The DNA site is built by Gly231 and Asp233. Asp233 serves as a coordination point for Mg(2+). The tract at residues 341–349 is interaction with PCNA; it reads QQSRLEGFF. Over residues 357–389 the composition is skewed to basic and acidic residues; the sequence is QEKATLKRKHEEKLELQKKKKKEEAKAKKEAKS. Residues 357 to 395 form a disordered region; that stretch reads QEKATLKRKHEEKLELQKKKKKEEAKAKKEAKSKPRGAV.

It belongs to the XPG/RAD2 endonuclease family. FEN1 subfamily. In terms of assembly, interacts with PCNA. Three molecules of FEN1 bind to one PCNA trimer with each molecule binding to one PCNA monomer. PCNA stimulates the nuclease activity without altering cleavage specificity. Requires Mg(2+) as cofactor. In terms of processing, phosphorylated. Phosphorylation upon DNA damage induces relocalization to the nuclear plasma.

The protein resides in the nucleus. Its subcellular location is the nucleolus. It is found in the nucleoplasm. The protein localises to the mitochondrion. Functionally, structure-specific nuclease with 5'-flap endonuclease and 5'-3' exonuclease activities involved in DNA replication and repair. During DNA replication, cleaves the 5'-overhanging flap structure that is generated by displacement synthesis when DNA polymerase encounters the 5'-end of a downstream Okazaki fragment. It enters the flap from the 5'-end and then tracks to cleave the flap base, leaving a nick for ligation. Also involved in the long patch base excision repair (LP-BER) pathway, by cleaving within the apurinic/apyrimidinic (AP) site-terminated flap. Acts as a genome stabilization factor that prevents flaps from equilibrating into structures that lead to duplications and deletions. Also possesses 5'-3' exonuclease activity on nicked or gapped double-stranded DNA, and exhibits RNase H activity. Also involved in replication and repair of rDNA and in repairing mitochondrial DNA. The chain is Flap endonuclease 1 from Ajellomyces dermatitidis (strain ER-3 / ATCC MYA-2586) (Blastomyces dermatitidis).